The following is a 207-amino-acid chain: Large ribosomal subunit protein uL4 (207 aa).

This sequence belongs to the universal ribosomal protein uL4 family. Part of the 50S ribosomal subunit.

In terms of biological role, one of the primary rRNA binding proteins, this protein initially binds near the 5'-end of the 23S rRNA. It is important during the early stages of 50S assembly. It makes multiple contacts with different domains of the 23S rRNA in the assembled 50S subunit and ribosome. Forms part of the polypeptide exit tunnel. The polypeptide is Large ribosomal subunit protein uL4 (Rickettsia africae (strain ESF-5)).